Reading from the N-terminus, the 194-residue chain is Recombination protein RecR (194 aa).

A C4-type zinc finger spans residues 55-70 (CRECGNLAEGELCPIC). The region spanning 78-171 (SLLAVVESVA…RVTRPAYGLP (94 aa)) is the Toprim domain.

The protein belongs to the RecR family.

Functionally, may play a role in DNA repair. It seems to be involved in an RecBC-independent recombinational process of DNA repair. It may act with RecF and RecO. The protein is Recombination protein RecR of Thermus thermophilus (strain ATCC 27634 / DSM 579 / HB8).